Reading from the N-terminus, the 388-residue chain is Staphopain A (388 aa).

An N-terminal signal peptide occupies residues 1-25 (MKRNFPKLIALSLIFSLSITPIANA). The propeptide occupies 26–214 (ESNSNIKAKD…TSQFKSNNYT (189 aa)). Residues Cys238, His334, and Asn355 contribute to the active site.

This sequence belongs to the peptidase C47 family. In terms of assembly, in the cytoplasm, prematurely activated/folded ScpA forms a stable non-covalent complex with ScpB. Cleavage leads to the activation of ScpA probably by an auto-catalytic manner.

The protein localises to the secreted. It catalyses the reaction Broad endopeptidase action on proteins including elastin, but rather limited hydrolysis of small-molecule substrates. Assays are conveniently made with hemoglobin, casein or Z-Phe-Arg-NHMec as substrate.. Prematurely activated/folded staphopain A is inhibited by staphostatin A (ScpB), which is probably required to protect staphylococcal cytoplasmic proteins from degradation by ScpA. Functionally, cysteine protease that plays an important role in the inhibition of host innate immune response. Cleaves host elastins found in connective tissues, pulmonary surfactant protein A in the lungs, and the chemokine receptor CXCR2 on leukocytes. Proteolytic cleavage of surfactant protein A impairs bacterial phagocytosis by neutrophils while CXCR2 degradation blocks neutrophil activation and chemotaxis. Additionally, promotes vascular leakage by activating the plasma kallikerin/kinin system, resulting in hypotension. This chain is Staphopain A (sspP), found in Staphylococcus aureus (strain MRSA252).